A 202-amino-acid polypeptide reads, in one-letter code: ATP-dependent Clp protease proteolytic subunit 1 (202 aa).

Ser101 (nucleophile) is an active-site residue. His126 is a catalytic residue.

Belongs to the peptidase S14 family. Fourteen ClpP subunits assemble into 2 heptameric rings which stack back to back to give a disk-like structure with a central cavity, resembling the structure of eukaryotic proteasomes.

It localises to the cytoplasm. It catalyses the reaction Hydrolysis of proteins to small peptides in the presence of ATP and magnesium. alpha-casein is the usual test substrate. In the absence of ATP, only oligopeptides shorter than five residues are hydrolyzed (such as succinyl-Leu-Tyr-|-NHMec, and Leu-Tyr-Leu-|-Tyr-Trp, in which cleavage of the -Tyr-|-Leu- and -Tyr-|-Trp bonds also occurs).. In terms of biological role, cleaves peptides in various proteins in a process that requires ATP hydrolysis. Has a chymotrypsin-like activity. Plays a major role in the degradation of misfolded proteins. The chain is ATP-dependent Clp protease proteolytic subunit 1 from Rhizobium etli (strain ATCC 51251 / DSM 11541 / JCM 21823 / NBRC 15573 / CFN 42).